The sequence spans 846 residues: Protein kintoun (846 aa).

Disordered regions lie at residues 1–21 (MSTA…ERAD), 372–416 (YLSR…PALT), 581–657 (HTSI…DSTI), and 743–846 (HDSS…DDEI). Residue serine 378 is modified to Phosphoserine. Positions 389–403 (PVEDDADGDMPETPE) are enriched in acidic residues. 2 stretches are compositionally biased toward basic residues: residues 596-612 (LHKK…KKQR) and 750-766 (QRKK…RAQQ). The residue at position 770 (serine 770) is a Phosphoserine. The span at 821–832 (TRQDHADADAKN) shows a compositional bias: basic and acidic residues.

The protein belongs to the PIH1 family. Kintoun subfamily. Interacts with Pp1alpha-96A, Pp1-87B, Pp1-13C and flw.

It is found in the cytoplasm. Its function is as follows. Required for cytoplasmic pre-assembly of axonemal dyneins, thereby playing a central role in motility in cilia and flagella. Involved in pre-assembly of dynein arm complexes in the cytoplasm before intraflagellar transport loads them for the ciliary compartment. This chain is Protein kintoun, found in Drosophila persimilis (Fruit fly).